Consider the following 570-residue polypeptide: Hydroxylamine reductase (570 aa).

Residues Cys5, Cys8, Cys17, and Cys23 each contribute to the [4Fe-4S] cluster site. 8 residues coordinate hybrid [4Fe-2O-2S] cluster: His266, Glu290, Cys334, Cys425, Cys453, Cys478, Glu513, and Lys515. Position 425 is a cysteine persulfide (Cys425).

The protein belongs to the HCP family. [4Fe-4S] cluster is required as a cofactor. The cofactor is hybrid [4Fe-2O-2S] cluster.

The protein localises to the cytoplasm. It carries out the reaction A + NH4(+) + H2O = hydroxylamine + AH2 + H(+). Its function is as follows. Catalyzes the reduction of hydroxylamine to form NH(3) and H(2)O. This chain is Hydroxylamine reductase, found in Clostridium botulinum (strain Kyoto / Type A2).